A 344-amino-acid polypeptide reads, in one-letter code: Arginine N-succinyltransferase (344 aa).

Succinyl-CoA is bound at residue L125. The active-site Proton donor is the H229.

Belongs to the arginine N-succinyltransferase family.

It carries out the reaction succinyl-CoA + L-arginine = N(2)-succinyl-L-arginine + CoA + H(+). Its pathway is amino-acid degradation; L-arginine degradation via AST pathway; L-glutamate and succinate from L-arginine: step 1/5. Its function is as follows. Catalyzes the transfer of succinyl-CoA to arginine to produce N(2)-succinylarginine. The protein is Arginine N-succinyltransferase of Salmonella arizonae (strain ATCC BAA-731 / CDC346-86 / RSK2980).